Consider the following 591-residue polypeptide: V-type ATP synthase alpha chain (591 aa).

Residue 233–240 (GPFGAGKT) participates in ATP binding.

This sequence belongs to the ATPase alpha/beta chains family.

It catalyses the reaction ATP + H2O + 4 H(+)(in) = ADP + phosphate + 5 H(+)(out). Functionally, produces ATP from ADP in the presence of a proton gradient across the membrane. The V-type alpha chain is a catalytic subunit. This is V-type ATP synthase alpha chain from Streptococcus pyogenes serotype M12 (strain MGAS2096).